The chain runs to 410 residues: Multifunctional CCA protein (410 aa).

2 residues coordinate ATP: glycine 8 and arginine 11. The CTP site is built by glycine 8 and arginine 11. Positions 21 and 23 each coordinate Mg(2+). ATP-binding residues include arginine 91, arginine 137, and arginine 140. The CTP site is built by arginine 91, arginine 137, and arginine 140. Residues 228–329 (TGVHVLSVLQ…LELLQSFDVY (102 aa)) enclose the HD domain.

The protein belongs to the tRNA nucleotidyltransferase/poly(A) polymerase family. Bacterial CCA-adding enzyme type 1 subfamily. As to quaternary structure, monomer. Can also form homodimers and oligomers. It depends on Mg(2+) as a cofactor. The cofactor is Ni(2+).

It carries out the reaction a tRNA precursor + 2 CTP + ATP = a tRNA with a 3' CCA end + 3 diphosphate. The catalysed reaction is a tRNA with a 3' CCA end + 2 CTP + ATP = a tRNA with a 3' CCACCA end + 3 diphosphate. Catalyzes the addition and repair of the essential 3'-terminal CCA sequence in tRNAs without using a nucleic acid template. Adds these three nucleotides in the order of C, C, and A to the tRNA nucleotide-73, using CTP and ATP as substrates and producing inorganic pyrophosphate. tRNA 3'-terminal CCA addition is required both for tRNA processing and repair. Also involved in tRNA surveillance by mediating tandem CCA addition to generate a CCACCA at the 3' terminus of unstable tRNAs. While stable tRNAs receive only 3'-terminal CCA, unstable tRNAs are marked with CCACCA and rapidly degraded. The polypeptide is Multifunctional CCA protein (Pseudomonas aeruginosa (strain LESB58)).